The following is a 319-amino-acid chain: Acetyl-coenzyme A carboxylase carboxyl transferase subunit alpha (319 aa).

Residues 39 to 293 (RLQKKSNDLT…KAVLEKQLHE (255 aa)) enclose the CoA carboxyltransferase C-terminal domain.

The protein belongs to the AccA family. Acetyl-CoA carboxylase is a heterohexamer composed of biotin carboxyl carrier protein (AccB), biotin carboxylase (AccC) and two subunits each of ACCase subunit alpha (AccA) and ACCase subunit beta (AccD).

The protein resides in the cytoplasm. It carries out the reaction N(6)-carboxybiotinyl-L-lysyl-[protein] + acetyl-CoA = N(6)-biotinyl-L-lysyl-[protein] + malonyl-CoA. It participates in lipid metabolism; malonyl-CoA biosynthesis; malonyl-CoA from acetyl-CoA: step 1/1. Component of the acetyl coenzyme A carboxylase (ACC) complex. First, biotin carboxylase catalyzes the carboxylation of biotin on its carrier protein (BCCP) and then the CO(2) group is transferred by the carboxyltransferase to acetyl-CoA to form malonyl-CoA. The protein is Acetyl-coenzyme A carboxylase carboxyl transferase subunit alpha of Neisseria meningitidis serogroup C / serotype 2a (strain ATCC 700532 / DSM 15464 / FAM18).